We begin with the raw amino-acid sequence, 749 residues long: Serine/threonine-protein phosphatase 4 regulatory subunit 3 (749 aa).

As to quaternary structure, regulatory subunit 3 (R3) of the histone H2A phosphatase complex (HTP-C) consisting of PPH3, PSY2 and PSY4.

The protein localises to the nucleus. Functionally, core regulatory subunit of the histone H2A phosphatase complex, which dephosphorylates H2AS128ph (gamma-H2A) that has been displaced from sites of DNA lesions in the double-stranded DNA break repair process. Dephosphorylation is necessary for efficient recovery from the DNA damage checkpoint. The polypeptide is Serine/threonine-protein phosphatase 4 regulatory subunit 3 (PSY2) (Kluyveromyces lactis (strain ATCC 8585 / CBS 2359 / DSM 70799 / NBRC 1267 / NRRL Y-1140 / WM37) (Yeast)).